A 323-amino-acid chain; its full sequence is tRNA dimethylallyltransferase (323 aa).

Residue 12–19 (GPTAAGKT) coordinates ATP. 14 to 19 (TAAGKT) is a binding site for substrate. Interaction with substrate tRNA stretches follow at residues 37 to 40 (DSAL) and 161 to 165 (QRLSR).

Belongs to the IPP transferase family. As to quaternary structure, monomer. Mg(2+) serves as cofactor.

It carries out the reaction adenosine(37) in tRNA + dimethylallyl diphosphate = N(6)-dimethylallyladenosine(37) in tRNA + diphosphate. Functionally, catalyzes the transfer of a dimethylallyl group onto the adenine at position 37 in tRNAs that read codons beginning with uridine, leading to the formation of N6-(dimethylallyl)adenosine (i(6)A). The polypeptide is tRNA dimethylallyltransferase (Pseudomonas fluorescens (strain Pf0-1)).